Consider the following 212-residue polypeptide: Protein-L-isoaspartate O-methyltransferase (212 aa).

The active site involves Ser-60.

Belongs to the methyltransferase superfamily. L-isoaspartyl/D-aspartyl protein methyltransferase family.

It is found in the cytoplasm. The catalysed reaction is [protein]-L-isoaspartate + S-adenosyl-L-methionine = [protein]-L-isoaspartate alpha-methyl ester + S-adenosyl-L-homocysteine. Catalyzes the methyl esterification of L-isoaspartyl residues in peptides and proteins that result from spontaneous decomposition of normal L-aspartyl and L-asparaginyl residues. It plays a role in the repair and/or degradation of damaged proteins. The chain is Protein-L-isoaspartate O-methyltransferase from Pseudomonas putida (strain ATCC 700007 / DSM 6899 / JCM 31910 / BCRC 17059 / LMG 24140 / F1).